The chain runs to 267 residues: uncharacterized protein (267 aa).

It to S.pombe SpAC18G6.12c.

This is an uncharacterized protein from Schizosaccharomyces pombe (strain 972 / ATCC 24843) (Fission yeast).